Consider the following 201-residue polypeptide: Imidazole glycerol phosphate synthase subunit HisH (201 aa).

The Glutamine amidotransferase type-1 domain maps to 1–201; it reads MVFIADYGAG…LKVLANFAEL (201 aa). The active-site Nucleophile is cysteine 79. Catalysis depends on residues histidine 183 and glutamate 185.

In terms of assembly, heterodimer of HisH and HisF.

It localises to the cytoplasm. It carries out the reaction 5-[(5-phospho-1-deoxy-D-ribulos-1-ylimino)methylamino]-1-(5-phospho-beta-D-ribosyl)imidazole-4-carboxamide + L-glutamine = D-erythro-1-(imidazol-4-yl)glycerol 3-phosphate + 5-amino-1-(5-phospho-beta-D-ribosyl)imidazole-4-carboxamide + L-glutamate + H(+). The enzyme catalyses L-glutamine + H2O = L-glutamate + NH4(+). The protein operates within amino-acid biosynthesis; L-histidine biosynthesis; L-histidine from 5-phospho-alpha-D-ribose 1-diphosphate: step 5/9. Functionally, IGPS catalyzes the conversion of PRFAR and glutamine to IGP, AICAR and glutamate. The HisH subunit catalyzes the hydrolysis of glutamine to glutamate and ammonia as part of the synthesis of IGP and AICAR. The resulting ammonia molecule is channeled to the active site of HisF. The protein is Imidazole glycerol phosphate synthase subunit HisH of Chlorobium chlorochromatii (strain CaD3).